We begin with the raw amino-acid sequence, 158 residues long: ATP synthase subunit delta, mitochondrial (158 aa).

The transit peptide at 1–22 directs the protein to the mitochondrion; it reads MFRLTSARALFRVANVAARRTY.

It belongs to the ATPase epsilon chain family. In terms of assembly, F-type ATPases have 2 components, CF(1) - the catalytic core - and CF(0) - the membrane proton channel. CF(1) has five subunits: alpha(3), beta(3), gamma(1), delta(1), epsilon(1). CF(0) has three main subunits: a, b and c.

The protein localises to the mitochondrion. Its subcellular location is the mitochondrion inner membrane. In terms of biological role, mitochondrial membrane ATP synthase (F(1)F(0) ATP synthase or Complex V) produces ATP from ADP in the presence of a proton gradient across the membrane which is generated by electron transport complexes of the respiratory chain. F-type ATPases consist of two structural domains, F(1) - containing the extramembraneous catalytic core, and F(0) - containing the membrane proton channel, linked together by a central stalk and a peripheral stalk. During catalysis, ATP turnover in the catalytic domain of F(1) is coupled via a rotary mechanism of the central stalk subunits to proton translocation. Part of the complex F(1) domain and of the central stalk which is part of the complex rotary element. Rotation of the central stalk against the surrounding alpha(3)beta(3) subunits leads to hydrolysis of ATP in three separate catalytic sites on the beta subunits. The chain is ATP synthase subunit delta, mitochondrial (ATP16) from Eremothecium gossypii (strain ATCC 10895 / CBS 109.51 / FGSC 9923 / NRRL Y-1056) (Yeast).